We begin with the raw amino-acid sequence, 341 residues long: UDP-3-O-acylglucosamine N-acyltransferase (341 aa).

The Proton acceptor role is filled by H237.

It belongs to the transferase hexapeptide repeat family. LpxD subfamily. As to quaternary structure, homotrimer.

It catalyses the reaction a UDP-3-O-[(3R)-3-hydroxyacyl]-alpha-D-glucosamine + a (3R)-hydroxyacyl-[ACP] = a UDP-2-N,3-O-bis[(3R)-3-hydroxyacyl]-alpha-D-glucosamine + holo-[ACP] + H(+). Its pathway is bacterial outer membrane biogenesis; LPS lipid A biosynthesis. In terms of biological role, catalyzes the N-acylation of UDP-3-O-acylglucosamine using 3-hydroxyacyl-ACP as the acyl donor. Is involved in the biosynthesis of lipid A, a phosphorylated glycolipid that anchors the lipopolysaccharide to the outer membrane of the cell. This is UDP-3-O-acylglucosamine N-acyltransferase from Azoarcus sp. (strain BH72).